The primary structure comprises 87 residues: MSETKVVRTLTGVVVSDKMDKTVTVLVERKVKHPIYGKIIRRSKKFHAHDENNEFKAGDLVVISESRPLSKTKSWVVTGLVEKSRQV.

It belongs to the universal ribosomal protein uS17 family. Part of the 30S ribosomal subunit.

One of the primary rRNA binding proteins, it binds specifically to the 5'-end of 16S ribosomal RNA. The protein is Small ribosomal subunit protein uS17 of Chromobacterium violaceum (strain ATCC 12472 / DSM 30191 / JCM 1249 / CCUG 213 / NBRC 12614 / NCIMB 9131 / NCTC 9757 / MK).